The primary structure comprises 319 residues: ATP-dependent 6-phosphofructokinase (319 aa).

G11 provides a ligand contact to ATP. 21-25 (RAVVR) provides a ligand contact to ADP. Residues 72 to 73 (RC) and 102 to 105 (GDGS) contribute to the ATP site. D103 provides a ligand contact to Mg(2+). Residue 125 to 127 (TID) participates in substrate binding. D127 functions as the Proton acceptor in the catalytic mechanism. ADP is bound at residue R154. Substrate contacts are provided by residues R162 and 169–171 (MGR). ADP-binding positions include 185 to 187 (GAE), R211, and 213 to 215 (KKH). Residues E222, R243, and 249-252 (HVQR) contribute to the substrate site.

Belongs to the phosphofructokinase type A (PFKA) family. ATP-dependent PFK group I subfamily. Prokaryotic clade 'B1' sub-subfamily. Homotetramer. Requires Mg(2+) as cofactor.

The protein resides in the cytoplasm. It catalyses the reaction beta-D-fructose 6-phosphate + ATP = beta-D-fructose 1,6-bisphosphate + ADP + H(+). Its pathway is carbohydrate degradation; glycolysis; D-glyceraldehyde 3-phosphate and glycerone phosphate from D-glucose: step 3/4. Allosterically activated by ADP and other diphosphonucleosides, and allosterically inhibited by phosphoenolpyruvate. Catalyzes the phosphorylation of D-fructose 6-phosphate to fructose 1,6-bisphosphate by ATP, the first committing step of glycolysis. In Geobacillus kaustophilus (strain HTA426), this protein is ATP-dependent 6-phosphofructokinase.